A 297-amino-acid polypeptide reads, in one-letter code: MPPRRYNPDTRRDELLERINLDIPGAVAQALREDLGGTVDANNDITAKLLPENSRSHATVITRENGVFCGKRWVEEVFIQLAGDDVTIIWHVDDGDVINANQSLFELEGPSRVLLTGERTALNFVQTLSGVASKVRHYVELLEGTNTQLLDTRKTLPGLRSALKYAVLCGGGANHRLGLSDAFLIKENHIIASGSVRQAVEKASWLHPDAPVEVEVENLEELDEALKAGADIIMLDNFETEQMREAVKRTNGKALLEVSGNVTDKTLREFAETGVDFISVGALTKHVQALDLSMRFR.

Residues Arg119, 152 to 154 (TRK), Arg176, Lys186, Glu215, Asp236, 259 to 261 (SGN), and 280 to 282 (VGA) each bind substrate.

The protein belongs to the NadC/ModD family. Homodimer Hexamer formed by 3 homodimers. Homodimer.

The enzyme catalyses nicotinate beta-D-ribonucleotide + CO2 + diphosphate = quinolinate + 5-phospho-alpha-D-ribose 1-diphosphate + 2 H(+). Its pathway is cofactor biosynthesis; NAD(+) biosynthesis; nicotinate D-ribonucleotide from quinolinate: step 1/1. Functionally, involved in the catabolism of quinolinic acid (QA). This Escherichia coli (strain K12) protein is Nicotinate-nucleotide pyrophosphorylase [carboxylating] (nadC).